Reading from the N-terminus, the 499-residue chain is Tyrosine-protein kinase Blk (499 aa).

The disordered stretch occupies residues 1-34 (MGLLSSKRQVSEKGKGWSPVKIRTQDKAPPPLPP). The N-myristoyl glycine moiety is linked to residue Gly2. Residues 52-112 (EEERFVVALF…PSNFVAPVET (61 aa)) enclose the SH3 domain. Positions 118–214 (WFFRTISRKD…GLCQKLTLPC (97 aa)) constitute an SH2 domain. The Protein kinase domain maps to 235-488 (LKLVRKLGSG…FLQSVLEDFY (254 aa)). Residues 241 to 249 (LGSGQFGEV) and Lys263 contribute to the ATP site. Catalysis depends on Asp354, which acts as the Proton acceptor. Tyr383 is subject to Phosphotyrosine; by autocatalysis.

The protein belongs to the protein kinase superfamily. Tyr protein kinase family. SRC subfamily. As to quaternary structure, interacts with CBL (via SH2 domain). Interacts with CD79A and CD79B (via SH2 domain). Phosphorylated on tyrosine residues after antibody-mediated surface engagement of the B-cell antigen receptor (BCR). In terms of processing, ubiquitination of activated BLK by the UBE3A ubiquitin protein ligase leads to its degradation by the ubiquitin-proteasome pathway. In terms of tissue distribution, expressed in immature Vgamma2 gamma-delta T-cells (at protein level). Expressed in the B-cell lineage.

It is found in the cell membrane. It catalyses the reaction L-tyrosyl-[protein] + ATP = O-phospho-L-tyrosyl-[protein] + ADP + H(+). Its activity is regulated as follows. Antibody-mediated surface engagement of the B-cell antigen receptor (BCR) which results in the phosphorylation of BLK on tyrosine residues, stimulates the enzymatic activity. In terms of biological role, non-receptor tyrosine kinase involved in B-lymphocyte development, differentiation and signaling. B-cell receptor (BCR) signaling requires a tight regulation of several protein tyrosine kinases and phosphatases, and associated coreceptors. Binding of antigen to the B-cell antigen receptor (BCR) triggers signaling that ultimately leads to B-cell activation. Signaling through BLK plays an important role in transmitting signals through surface immunoglobulins and supports the pro-B to pre-B transition, as well as the signaling for growth arrest and apoptosis downstream of B-cell receptor. Specifically binds and phosphorylates CD79A at 'Tyr-188'and 'Tyr-199', as well as CD79B at 'Tyr-196' and 'Tyr-207'. Also phosphorylates the immunoglobulin G receptor FCGR2. With FYN and LYN, plays an essential role in pre-B-cell receptor (pre-BCR)-mediated NF-kappa-B activation. Also contributes to BTK activation by indirectly stimulating BTK intramolecular autophosphorylation. In pancreatic islets, acts as a modulator of beta-cells function through the up-regulation of PDX1 and NKX6-1 and consequent stimulation of insulin secretion in response to glucose. Phosphorylates CGAS, promoting retention of CGAS in the cytosol. This Mus musculus (Mouse) protein is Tyrosine-protein kinase Blk (Blk).